The following is a 253-amino-acid chain: (S)-2-haloacid dehalogenase (253 aa).

Aspartate 8 functions as the Nucleophile in the catalytic mechanism. An (S)-2-haloacid-binding positions include 9–10 (AY), arginine 39, and 114–115 (SN). The important for catalytic activity stretch occupies residues 171 to 176 (SSNGFD).

This sequence belongs to the HAD-like hydrolase superfamily. S-2-haloalkanoic acid dehalogenase family. In terms of assembly, homodimer.

It carries out the reaction an (S)-2-haloacid + H2O = a (2R)-2-hydroxycarboxylate + a halide anion + H(+). It catalyses the reaction (S)-2-chloropropanoate + H2O = (R)-lactate + chloride + H(+). Functionally, catalyzes the hydrolytic dehalogenation of small (S)-2-haloalkanoic acids to yield the corresponding (R)-2-hydroxyalkanoic acids. Acts on acids of short chain lengths, C(2) to C(4), with inversion of configuration at C-2. Active with 2-halogenated carboxylic acids and converts only the S-isomer (or L-isomer) of 2-chloropropionic acid with inversion of configuration to produce R-lactate (or D-isomer). This Xanthobacter autotrophicus protein is (S)-2-haloacid dehalogenase.